The sequence spans 739 residues: Phosphoribosylformylglycinamidine synthase subunit PurL (739 aa).

His-54 is an active-site residue. Residues Tyr-57 and Lys-96 each contribute to the ATP site. Mg(2+) is bound at residue Glu-98. Substrate is bound by residues 99–102 (SHNH) and Arg-121. Catalysis depends on His-100, which acts as the Proton acceptor. Asp-122 is a binding site for Mg(2+). Gln-245 serves as a coordination point for substrate. Asp-273 provides a ligand contact to Mg(2+). Residue 317–319 (ESQ) coordinates substrate. ATP-binding residues include Asp-500 and Gly-537. Asn-538 is a Mg(2+) binding site. Ser-540 serves as a coordination point for substrate.

The protein belongs to the FGAMS family. As to quaternary structure, monomer. Part of the FGAM synthase complex composed of 1 PurL, 1 PurQ and 2 PurS subunits.

The protein localises to the cytoplasm. The catalysed reaction is N(2)-formyl-N(1)-(5-phospho-beta-D-ribosyl)glycinamide + L-glutamine + ATP + H2O = 2-formamido-N(1)-(5-O-phospho-beta-D-ribosyl)acetamidine + L-glutamate + ADP + phosphate + H(+). It functions in the pathway purine metabolism; IMP biosynthesis via de novo pathway; 5-amino-1-(5-phospho-D-ribosyl)imidazole from N(2)-formyl-N(1)-(5-phospho-D-ribosyl)glycinamide: step 1/2. Its function is as follows. Part of the phosphoribosylformylglycinamidine synthase complex involved in the purines biosynthetic pathway. Catalyzes the ATP-dependent conversion of formylglycinamide ribonucleotide (FGAR) and glutamine to yield formylglycinamidine ribonucleotide (FGAM) and glutamate. The FGAM synthase complex is composed of three subunits. PurQ produces an ammonia molecule by converting glutamine to glutamate. PurL transfers the ammonia molecule to FGAR to form FGAM in an ATP-dependent manner. PurS interacts with PurQ and PurL and is thought to assist in the transfer of the ammonia molecule from PurQ to PurL. The sequence is that of Phosphoribosylformylglycinamidine synthase subunit PurL from Bacillus anthracis (strain A0248).